Consider the following 509-residue polypeptide: Glutamate--tRNA ligase (509 aa).

The 'HIGH' region motif lies at 20–30 (PSPTGFPHVGT). Residues Cys117, Cys119, Cys144, and His146 each contribute to the Zn(2+) site. The 'KMSKS' region signature appears at 261–265 (KLSKR). Residue Lys264 participates in ATP binding.

The protein belongs to the class-I aminoacyl-tRNA synthetase family. Glutamate--tRNA ligase type 1 subfamily. As to quaternary structure, monomer. It depends on Zn(2+) as a cofactor.

The protein resides in the cytoplasm. The catalysed reaction is tRNA(Glu) + L-glutamate + ATP = L-glutamyl-tRNA(Glu) + AMP + diphosphate. Functionally, catalyzes the attachment of glutamate to tRNA(Glu) in a two-step reaction: glutamate is first activated by ATP to form Glu-AMP and then transferred to the acceptor end of tRNA(Glu). The chain is Glutamate--tRNA ligase from Psychrobacter cryohalolentis (strain ATCC BAA-1226 / DSM 17306 / VKM B-2378 / K5).